Here is a 278-residue protein sequence, read N- to C-terminus: MDVRQSVHSEHAKTLDTTELRKKFLIEQIFTPNQYTMTYSHIDRIVVGGIMPVDGEITFDDGIGKQFGVNYFLERRELGLINIGGPAKIVIDGTSYEVGNEEALYVGKGAKALAFSSLDSAKPAKLYYNSAPAHAVFPTRIITQDDAIKAPLGDVKTCNKRTICKYLVPEVVETCQLSMGLTRLAEGSNWNSMPTHTHERRMEVYFYFDMAEDTIIFHMMGEPHETRHLVMHNEQAVISPSWSIHTGVGTKNYAFIWGMIGENLTFDDMDHIAMLDLR.

Zn(2+) contacts are provided by histidine 196, histidine 198, glutamate 203, and histidine 245.

The protein belongs to the KduI family. It depends on Zn(2+) as a cofactor.

It catalyses the reaction 5-dehydro-4-deoxy-D-glucuronate = 3-deoxy-D-glycero-2,5-hexodiulosonate. It participates in glycan metabolism; pectin degradation; 2-dehydro-3-deoxy-D-gluconate from pectin: step 4/5. Catalyzes the isomerization of 5-dehydro-4-deoxy-D-glucuronate to 3-deoxy-D-glycero-2,5-hexodiulosonate. The chain is 4-deoxy-L-threo-5-hexosulose-uronate ketol-isomerase from Pectobacterium carotovorum subsp. carotovorum (Erwinia carotovora subsp. carotovora).